Reading from the N-terminus, the 954-residue chain is SWI/SNF-related matrix-associated actin-dependent regulator of chromatin subfamily A-like protein 1 (954 aa).

Disordered regions lie at residues 1-20 (MSLP…RQKA) and 27-238 (KLLA…NSQK). Ser-2 carries the post-translational modification N-acetylserine. Residues 3 to 34 (LPLTEEQRKKIEENRQKALARRAEKLLAEQHQ) are a coiled coil. Residues 5 to 30 (LTEEQRKKIEENRQKALARRAEKLLA) are mediates interaction with RPA2. The span at 7 to 20 (EEQRKKIEENRQKA) shows a compositional bias: basic and acidic residues. Polar residues predominate over residues 72–83 (KQQNLSSSSNAD). Phosphoserine occurs at positions 112, 123, 129, and 151. Composition is skewed to polar residues over residues 171 to 183 (KSSQ…SSGQ) and 197 to 238 (ASPS…NSQK). Position 198 is a phosphoserine (Ser-198). 2 HARP domains span residues 226-303 (SGSS…QPLE) and 327-398 (SLSF…DPLP). Residues 445–600 (NFAIAKGGRL…YTQIIAVKPT (156 aa)) form the Helicase ATP-binding domain. 458–465 (DDMGLGKT) lines the ATP pocket. The DESH box motif lies at 549–552 (DESH). Residues 644-661 (RRLKSDVLSQLPAKQRKI) carry the Nuclear localization signal motif. The Helicase C-terminal domain maps to 716–869 (YILDLLESGR…ETNFSEMTES (154 aa)). Residues 904–934 (ESFDPGSASGTSGSSSQNMGDTLDESSLTAS) are disordered. Over residues 909-919 (GSASGTSGSSS) the composition is skewed to low complexity. The span at 920–934 (QNMGDTLDESSLTAS) shows a compositional bias: polar residues.

Belongs to the SNF2/RAD54 helicase family. SMARCAL1 subfamily. As to quaternary structure, interacts with RPA2; the interaction is direct and mediates the recruitment by the RPA complex of SMARCAL1 to sites of DNA damage. Post-translationally, DNA damage-regulated phosphorylation by kinases that may include ATM, ATR and PRKDC. Ubiquitously expressed, with high levels in testis.

It is found in the nucleus. It catalyses the reaction ATP + H2O = ADP + phosphate + H(+). Its function is as follows. ATP-dependent annealing helicase that binds selectively to fork DNA relative to ssDNA or dsDNA and catalyzes the rewinding of the stably unwound DNA. Rewinds single-stranded DNA bubbles that are stably bound by replication protein A (RPA). Acts throughout the genome to reanneal stably unwound DNA, performing the opposite reaction of many enzymes, such as helicases and polymerases, that unwind DNA. May play an important role in DNA damage response by acting at stalled replication forks. The chain is SWI/SNF-related matrix-associated actin-dependent regulator of chromatin subfamily A-like protein 1 from Homo sapiens (Human).